A 230-amino-acid chain; its full sequence is Probable methylthioribulose-1-phosphate dehydratase (230 aa).

Cys87 contacts substrate. Positions 105 and 107 each coordinate Zn(2+). Glu129 serves as the catalytic Proton donor/acceptor. Zn(2+) is bound at residue His185.

This sequence belongs to the aldolase class II family. MtnB subfamily. Requires Zn(2+) as cofactor.

Its subcellular location is the cytoplasm. The enzyme catalyses 5-(methylsulfanyl)-D-ribulose 1-phosphate = 5-methylsulfanyl-2,3-dioxopentyl phosphate + H2O. It functions in the pathway amino-acid biosynthesis; L-methionine biosynthesis via salvage pathway; L-methionine from S-methyl-5-thio-alpha-D-ribose 1-phosphate: step 2/6. Functionally, catalyzes the dehydration of methylthioribulose-1-phosphate (MTRu-1-P) into 2,3-diketo-5-methylthiopentyl-1-phosphate (DK-MTP-1-P). This Drosophila grimshawi (Hawaiian fruit fly) protein is Probable methylthioribulose-1-phosphate dehydratase.